We begin with the raw amino-acid sequence, 307 residues long: MEAHKPVLFDEVMEGLAIRPDGIYVDGTFGRGGHSFGILQRLGPNGRLMAMDKDPDAVAVENKALFEDARLSIVHETFANLQKAVRDRGWEGKVNGILLDIGVSSPQLEDAKRGFSFSKDGPLDMRMNPKQSMDAASWINQAAMEDIRRVLWNYGEERFAKRIAQAIVNAREEKPITRTQELSDIVIKAYPQREIKKHPATRTFQAIRIFINRELDELRECLPQCLETLAVGGRLCVISFHSLEDRLVKRFIQKESRDHLPREIPILAKDIKHRLKPLGSLIRPTEAEIKKNPRARSARLRIVEKLS.

S-adenosyl-L-methionine-binding positions include 32-34, D52, F78, D100, and Q107; that span reads GGH.

Belongs to the methyltransferase superfamily. RsmH family.

It localises to the cytoplasm. The catalysed reaction is cytidine(1402) in 16S rRNA + S-adenosyl-L-methionine = N(4)-methylcytidine(1402) in 16S rRNA + S-adenosyl-L-homocysteine + H(+). Functionally, specifically methylates the N4 position of cytidine in position 1402 (C1402) of 16S rRNA. In Coxiella burnetii (strain CbuG_Q212) (Coxiella burnetii (strain Q212)), this protein is Ribosomal RNA small subunit methyltransferase H.